Reading from the N-terminus, the 98-residue chain is Putative protein adenylyltransferase MJ0126 (98 aa).

The GSX(10)DXD motif signature appears at 31–45 (GSYARNEQTETSDID). Residues Asp43, Asp45, and Asp75 each contribute to the Mg(2+) site.

It belongs to the MntA antitoxin family. In terms of assembly, probably forms a complex with cognate toxin MJ0125. Mg(2+) serves as cofactor.

The catalysed reaction is L-tyrosyl-[protein] + ATP = O-(5'-adenylyl)-L-tyrosyl-[protein] + diphosphate. It carries out the reaction O-(5'-adenylyl)-L-tyrosyl-[protein] + ATP = O-[5'-(adenylyl-(5'-&gt;3')-adenylyl)]-L-tyrosyl-[protein] + diphosphate. Functionally, probable antitoxin component of a putative type VII toxin-antitoxin (TA) system. Neutralizes cognate toxic MJ0125 by di-AMPylation. This Methanocaldococcus jannaschii (strain ATCC 43067 / DSM 2661 / JAL-1 / JCM 10045 / NBRC 100440) (Methanococcus jannaschii) protein is Putative protein adenylyltransferase MJ0126.